The following is a 432-amino-acid chain: Sonic hedgehog protein (432 aa).

An N-terminal signal peptide occupies residues 1 to 26 (MDEMILLRRVLLAGFICALLVPSGLS). The N-palmitoyl cysteine moiety is linked to residue cysteine 27. The Cardin-Weintraub signature appears at 35 to 41 (TRKRFKK). Residues glutamate 92, glutamate 93, aspartate 98, threonine 128, glutamate 129, aspartate 132, and aspartate 134 each contribute to the Ca(2+) site. Residues histidine 143, aspartate 150, and histidine 185 each contribute to the Zn(2+) site. Glycine 200 carries the Cholesterol glycine ester lipid modification.

Belongs to the hedgehog family. As to quaternary structure, interacts with HHATL/GUP1 which negatively regulates HHAT-mediated palmitoylation of the SHH N-terminus. Interacts with BOC and CDON. Interacts with HHIP. Interacts with DISP1 via its cholesterol anchor. Interacts with SCUBE2. Multimer. In terms of processing, the C-terminal domain displays an autoproteolysis activity and a cholesterol transferase activity. Both activities result in the cleavage of the full-length protein and covalent attachment of a cholesterol moiety to the C-terminal of the newly generated N-terminal fragment (ShhN). Cholesterylation is required for the sonic hedgehog protein N-product targeting to lipid rafts and multimerization. ShhN is the active species in both local and long-range signaling, whereas the C-product (ShhC) is degraded in the reticulum endoplasmic. N-palmitoylation by HHAT of ShhN is required for sonic hedgehog protein N-product multimerization and full activity. It is a prerequisite for the membrane-proximal positioning and the subsequent shedding of this N-terminal peptide. Post-translationally, the lipidated N- and C-terminal peptides of ShhNp can be cleaved (shedding). The N-terminal palmitoylated peptide is cleaved at the Cardin-Weintraub (CW) motif site. The cleavage reduced the interactions with heparan sulfate. The cleavage is enhanced by SCUBE2.

Its subcellular location is the endoplasmic reticulum membrane. The protein localises to the golgi apparatus membrane. It is found in the cell membrane. It catalyses the reaction glycyl-L-cysteinyl-[protein] + cholesterol + H(+) = [protein]-C-terminal glycyl cholesterol ester + N-terminal L-cysteinyl-[protein]. Functionally, the C-terminal part of the sonic hedgehog protein precursor displays an autoproteolysis and a cholesterol transferase activity. Both activities result in the cleavage of the full-length protein into two parts (ShhN and ShhC) followed by the covalent attachment of a cholesterol moiety to the C-terminal of the newly generated ShhN. Both activities occur in the endoplasmic reticulum. Once cleaved, ShhC is degraded in the endoplasmic reticulum. In terms of biological role, the dually lipidated sonic hedgehog protein N-product (ShhNp) is a morphogen which is essential for a variety of patterning events during development. Induces ventral cell fate in the neural tube and somites. Involved in the patterning of the anterior-posterior axis of the developing limb bud. Essential for axon guidance. Binds to the patched (PTCH1) receptor, which functions in association with smoothened (SMO), to activate the transcription of target genes. In the absence of SHH, PTCH1 represses the constitutive signaling activity of SMO. In Cynops pyrrhogaster (Japanese fire-bellied newt), this protein is Sonic hedgehog protein.